The sequence spans 262 residues: Indole-3-glycerol phosphate synthase (262 aa).

The protein belongs to the TrpC family.

It catalyses the reaction 1-(2-carboxyphenylamino)-1-deoxy-D-ribulose 5-phosphate + H(+) = (1S,2R)-1-C-(indol-3-yl)glycerol 3-phosphate + CO2 + H2O. It participates in amino-acid biosynthesis; L-tryptophan biosynthesis; L-tryptophan from chorismate: step 4/5. This Clostridium kluyveri (strain NBRC 12016) protein is Indole-3-glycerol phosphate synthase.